The primary structure comprises 156 residues: Transcription factor MafF (156 aa).

A basic motif region spans residues Arg51–Lys76. Residues Arg51 to Leu114 enclose the bZIP domain. Residues Leu79–Leu93 form a leucine-zipper region.

The protein belongs to the bZIP family. Maf subfamily. As to quaternary structure, monomer and homo- or heterodimer. Interacts with MIP. Forms high affinity heterodimers with members of the CNC-bZIP family such as NFE2L1/NRF1. In terms of tissue distribution, highly expressed in the lung, lower expression in the brain, thymus, liver, spleen, intestine, kidney, heart, muscle, and ovary. Not significantly expressed in hematopoietic cells.

The protein localises to the nucleus. Functionally, since they lack a putative transactivation domain, the small Mafs behave as transcriptional repressors when they dimerize among themselves. However, they seem to serve as transcriptional activators by dimerizing with other (usually larger) basic-zipper proteins, such as NFE2L1/NRF1, and recruiting them to specific DNA-binding sites. Interacts with the upstream promoter region of the oxytocin receptor gene. May be a transcriptional enhancer in the up-regulation of the oxytocin receptor gene at parturition. This chain is Transcription factor MafF (Maff), found in Mus musculus (Mouse).